Here is a 137-residue protein sequence, read N- to C-terminus: L-ectoine synthase (137 aa).

A disordered region spans residues 115 to 137; sequence EVHDESGAYPADPELAREPVAAD.

Belongs to the ectoine synthase family.

The catalysed reaction is (2S)-4-acetamido-2-aminobutanoate = L-ectoine + H2O. Its pathway is amine and polyamine biosynthesis; ectoine biosynthesis; L-ectoine from L-aspartate 4-semialdehyde: step 3/3. Catalyzes the circularization of gamma-N-acetyl-alpha,gamma-diaminobutyric acid (ADABA) to ectoine (1,4,5,6-tetrahydro-2-methyl-4-pyrimidine carboxylic acid), which is an excellent osmoprotectant. This chain is L-ectoine synthase, found in Sphingopyxis alaskensis (strain DSM 13593 / LMG 18877 / RB2256) (Sphingomonas alaskensis).